A 1255-amino-acid polypeptide reads, in one-letter code: Protein diaphanous homolog 1 (1255 aa).

Methionine 1 bears the N-acetylmethionine mark. Gly residues predominate over residues 1 to 12 (MEPSGGGLGPGR). The tract at residues 1–73 (MEPSGGGLGP…ASYGDDPTAQ (73 aa)) is disordered. At serine 22 the chain carries Phosphoserine. Over residues 58 to 73 (AHRNSSASYGDDPTAQ) the composition is skewed to polar residues. Positions 75–440 (LQDISDEQVL…QIVLHKNGTD (366 aa)) constitute a GBD/FH3 domain. The stretch at 460–562 (IDKTKVEKSE…MASLSAVVVA (103 aa)) forms a coiled coil. The segment at 567 to 737 (SSAAVPPAPP…MGVPPPPPFG (171 aa)) is disordered. Residues 585–736 (IPPPPPPPPL…GMGVPPPPPF (152 aa)) are compositionally biased toward pro residues. Residues 586–747 (PPPPPPPPLP…FGVPAAPVLP (162 aa)) enclose the FH1 domain. Position 751 is a phosphothreonine (threonine 751). In terms of domain architecture, FH2 spans 752-1154 (PKKVYKPEVQ…MRRAKLAKEK (403 aa)). Residues 1027-1179 (VEKASRVSAE…IDMNAEGDET (153 aa)) adopt a coiled-coil conformation. N6-acetyllysine is present on residues lysine 1040 and lysine 1086. Position 1104 is a phosphotyrosine (tyrosine 1104). A DAD domain is found at 1177–1205 (DETGVMDSLLEALQSGAAFRRKRGPRQVN). Serine 1237 is subject to Phosphoserine.

The protein belongs to the formin homology family. Diaphanous subfamily. In terms of assembly, homodimer. Interacts with the GTP-bound form of RHOA. Interacts with RHOC, PFY1, MAPRE1, BAIAP2 and APC. Interacts with APC; acts as a scaffold protein for MAPRE1 and APC to stabilize microtubules and promote cell migration. Interacts with SCAI. Interacts with DCAF7, via FH2 domain. Interacts with NCDN. Interacts with OSBPL10, OSBPL2, VIM, TUBB and DYN1. Phosphorylation at Thr-751 is stimulated by cAMP and regulates stability, complex formation and mitochondrial movement. As to expression, widely expressed. In the organ of Corti, it is expressed at the outer and inner hair cell layers. Expression at the inner hair cell layer is restricted to inner pillar cells. Detected in cochlear spiral ganglion neurons.

The protein localises to the cell membrane. Its subcellular location is the cell projection. The protein resides in the ruffle membrane. It localises to the cytoplasm. It is found in the cytoskeleton. The protein localises to the microtubule organizing center. Its subcellular location is the centrosome. The protein resides in the spindle. It localises to the nucleus. In terms of biological role, actin nucleation and elongation factor required for the assembly of F-actin structures, such as actin cables and stress fibers. Binds to the barbed end of the actin filament and slows down actin polymerization and depolymerization. Required for cytokinesis, and transcriptional activation of the serum response factor. DFR proteins couple Rho and Src tyrosine kinase during signaling and the regulation of actin dynamics. Functions as a scaffold protein for MAPRE1 and APC to stabilize microtubules and promote cell migration. Has neurite outgrowth promoting activity. Acts in a Rho-dependent manner to recruit PFY1 to the membrane. The MEMO1-RHOA-DIAPH1 signaling pathway plays an important role in ERBB2-dependent stabilization of microtubules at the cell cortex. It controls the localization of APC and CLASP2 to the cell membrane, via the regulation of GSK3B activity. In turn, membrane-bound APC allows the localization of the MACF1 to the cell membrane, which is required for microtubule capture and stabilization. Plays a role in the regulation of cell morphology and cytoskeletal organization. Required in the control of cell shape. Also acts as an actin nucleation and elongation factor in the nucleus by promoting nuclear actin polymerization inside the nucleus to drive serum-dependent SRF-MRTFA activity. The protein is Protein diaphanous homolog 1 (Diaph1) of Mus musculus (Mouse).